Here is a 76-residue protein sequence, read N- to C-terminus: DNA-binding protein S1FA2 (76 aa).

The Nuclear localization signal signature appears at 50–55 (PPRKKK). Basic residues predominate over residues 51-66 (PRKKKPLSKKKLKREK). The tract at residues 51–76 (PRKKKPLSKKKLKREKLKQGVPVPGE) is disordered.

The protein belongs to the S1FA transcription factor family.

It is found in the nucleus. Its function is as follows. DNA-binding protein that specifically recognizes a negative element (S1F) within the RPS1 promoter. This Arabidopsis thaliana (Mouse-ear cress) protein is DNA-binding protein S1FA2 (S1FA2).